The sequence spans 394 residues: Putative 8-amino-7-oxononanoate synthase (394 aa).

A substrate-binding site is contributed by Arg-23. 110–111 (GY) serves as a coordination point for pyridoxal 5'-phosphate. His-135 lines the substrate pocket. Residues Ser-182, 207–210 (DEAH), and 238–241 (TFSK) contribute to the pyridoxal 5'-phosphate site. Lys-241 is modified (N6-(pyridoxal phosphate)lysine). A substrate-binding site is contributed by Thr-355.

It belongs to the class-II pyridoxal-phosphate-dependent aminotransferase family. BioF subfamily. As to quaternary structure, homodimer. Pyridoxal 5'-phosphate serves as cofactor.

The enzyme catalyses 6-carboxyhexanoyl-[ACP] + L-alanine + H(+) = (8S)-8-amino-7-oxononanoate + holo-[ACP] + CO2. The protein operates within cofactor biosynthesis; biotin biosynthesis. In terms of biological role, catalyzes the decarboxylative condensation of pimeloyl-[acyl-carrier protein] and L-alanine to produce 8-amino-7-oxononanoate (AON), [acyl-carrier protein], and carbon dioxide. The protein is Putative 8-amino-7-oxononanoate synthase (bioF) of Bacillus cereus (strain Q1).